We begin with the raw amino-acid sequence, 264 residues long: MIHDDDPNAPGAPHDDATAAPASATRAAPAAGDDDDANPLHLRRIRSFVTRAGRVSTGQRRAIDELGPRFVIPYGSAQPDWDAIFGRRAPRVLEIGFGMGASTAEIAALRPGDDFIGVEVHEPGVGALLKLIGEQQLSNIRIIQHDAVEVLAQMIAPDSLDGVHIFFPDPWHKARHHKRRLIQPPFVAQLAAHLKPGAYLHCATDWQNYAEQMLEVLSADPSLENTAQNYAPRPGYRPVTKFERRGLRLGHGVWDLVFRKKHAG.

A disordered region spans residues 1–39 (MIHDDDPNAPGAPHDDATAAPASATRAAPAAGDDDDANP). The segment covering 18–31 (TAAPASATRAAPAA) has biased composition (low complexity). Positions 94, 119, 146, and 169 each coordinate S-adenosyl-L-methionine. The active site involves Asp-169. Substrate is bound by residues Lys-173, Asp-205, and 240 to 243 (TKFE).

This sequence belongs to the class I-like SAM-binding methyltransferase superfamily. TrmB family.

It catalyses the reaction guanosine(46) in tRNA + S-adenosyl-L-methionine = N(7)-methylguanosine(46) in tRNA + S-adenosyl-L-homocysteine. Its pathway is tRNA modification; N(7)-methylguanine-tRNA biosynthesis. Functionally, catalyzes the formation of N(7)-methylguanine at position 46 (m7G46) in tRNA. This Burkholderia mallei (strain ATCC 23344) protein is tRNA (guanine-N(7)-)-methyltransferase.